A 213-amino-acid polypeptide reads, in one-letter code: NADH dehydrogenase [ubiquinone] iron-sulfur protein 7, mitochondrial (213 aa).

The transit peptide at 1 to 38 directs the protein to the mitochondrion; it reads MAVLSAPGLRGFRILGLRSSVGPAVQARGVHQSVATDG. Residues 31 to 53 are disordered; that stretch reads HQSVATDGPSSTQPALPKARAVA. Positions 33–44 are enriched in polar residues; that stretch reads SVATDGPSSTQP. [4Fe-4S] cluster-binding residues include C88 and C89. R111 carries the post-translational modification Hydroxyarginine. Residues C153 and C183 each contribute to the [4Fe-4S] cluster site.

Belongs to the complex I 20 kDa subunit family. In terms of assembly, core subunit of respiratory chain NADH dehydrogenase (Complex I) which is composed of 45 different subunits. This is a component of the iron-sulfur (IP) fragment of the enzyme. [4Fe-4S] cluster serves as cofactor. Post-translationally, hydroxylated at Arg-111 by NDUFAF5 early in the pathway of assembly of complex I, before the formation of the juncture between peripheral and membrane arms.

Its subcellular location is the mitochondrion inner membrane. It catalyses the reaction a ubiquinone + NADH + 5 H(+)(in) = a ubiquinol + NAD(+) + 4 H(+)(out). Its function is as follows. Core subunit of the mitochondrial membrane respiratory chain NADH dehydrogenase (Complex I) which catalyzes electron transfer from NADH through the respiratory chain, using ubiquinone as an electron acceptor. Essential for the catalytic activity of complex I. The chain is NADH dehydrogenase [ubiquinone] iron-sulfur protein 7, mitochondrial (NDUFS7) from Homo sapiens (Human).